The chain runs to 357 residues: Protein MGF 360-14L (357 aa).

It belongs to the asfivirus MGF 360 family. In terms of assembly, interacts with host IRF3 and TRIM21; these interactions mediates degradation of IRF3 through TRIM21 and ubiquitin-meditated proteolysis.

It localises to the host cytoplasm. Plays a role in virus cell tropism, and may be required for efficient virus replication in macrophages. Also inhibits the host cGAS/STING-mediated type I interferon production by inducing host IRF3 degradation through the proteasome pathway. The chain is Protein MGF 360-14L from Ornithodoros (relapsing fever ticks).